We begin with the raw amino-acid sequence, 579 residues long: Nuclear receptor subfamily 1 group D member 2 (579 aa).

A required for phosphorylation by CSNK1E and cytoplasmic localization region spans residues 1–60 (MEVNAGGVIAYISSSSSASSPASCHSEGSENSFQSSSSSVPSSPNSSNSDTNGNPKNGDL). Residues 1 to 99 (MEVNAGGVIA…HSGVTKFSGM (99 aa)) form a modulating region. A compositionally biased stretch (low complexity) spans 13–54 (SSSSSASSPASCHSEGSENSFQSSSSSVPSSPNSSNSDTNGN). The interval 13–61 (SSSSSASSPASCHSEGSENSFQSSSSSVPSSPNSSNSDTNGNPKNGDLA) is disordered. The residue at position 46 (serine 46) is a Phosphoserine; by GSK3-beta. The segment at residues 100 to 176 (VLLCKVCGDV…VGMSRDAVRF (77 aa)) is a DNA-binding region (nuclear receptor). 2 consecutive NR C4-type zinc fingers follow at residues 103-123 (CKVC…CEGC) and 140-164 (CLKN…FKKC). N6-acetyllysine; by KAT5 is present on residues lysine 162 and lysine 163. The interval 222-250 (PAQEQLRPKPQLEQENIKSSSPPSSDFAK) is disordered. Positions 227–237 (LRPKPQLEQEN) are enriched in basic and acidic residues. 2 disulfide bridges follow: cysteine 337/cysteine 343 and cysteine 374/cysteine 384. An NR LBD domain is found at 369–579 (KNSYLCNTGG…EELLAFKVHP (211 aa)). Residues cysteine 384 and histidine 568 each contribute to the heme site. Residues 397-579 (SGHEIWEEFS…EELLAFKVHP (183 aa)) form an interaction with ZNHIT1 region.

The protein belongs to the nuclear hormone receptor family. NR1 subfamily. In terms of assembly, binds DNA as a monomer or a homodimer. Interacts with NCOA5 coactivator, leading to a strong increase of transcription of target genes. Interacts (via N-terminus) with KAT5. Interacts (via C-terminus) with HDAC1. Interacts with ZNHIT1. Interacts with SIAH2. Deacetylated by HDAC1. Acetylation and deacetylation regulate its transcriptional regulatory activity. Post-translationally, under more reducing intracellular redox conditions, Cys-384 is in its heme-bound state, which is optimal for recruitment of the NCOR1/HDAC3 corepressor complex and repression of target genes. When subjected to oxidative stress conditions, Cys-384 undergoes oxidation to form a disulfide bridge with Cys-374, also triggering a ligand switch that results in release of bound heme and derepression of target genes. In terms of processing, ubiquitinated by SIAH2; leading to proteasomal degradation. Phosphorylated by CSNK1E; phosphorylation enhances its cytoplasmic localization. In terms of tissue distribution, widely expressed. Expressed at high levels in the liver, adipose tissue, skeletal muscle and brain. Expression oscillates diurnally in the suprachiasmatic nucleus (SCN) of the hypothalamus as well as in peripheral tissues.

It is found in the nucleus. The protein resides in the cytoplasm. Its activity is regulated as follows. The heme-bound form can bind gaseous signaling molecules such as CO and nitric oxide (NO) and NO can reverse its transcriptional repressor activity. Its function is as follows. Transcriptional repressor which coordinates circadian rhythm and metabolic pathways in a heme-dependent manner. Integral component of the complex transcription machinery that governs circadian rhythmicity and forms a critical negative limb of the circadian clock by directly repressing the expression of core clock components BMAL1 and CLOCK. Also regulates genes involved in metabolic functions, including lipid metabolism and the inflammatory response. Acts as a receptor for heme which stimulates its interaction with the NCOR1/HDAC3 corepressor complex, enhancing transcriptional repression. Recognizes two classes of DNA response elements within the promoter of its target genes and can bind to DNA as either monomers or homodimers, depending on the nature of the response element. Binds as a monomer to a response element composed of the consensus half-site motif 5'-[A/G]GGTCA-3' preceded by an A/T-rich 5' sequence (RevRE), or as a homodimer to a direct repeat of the core motif spaced by two nuclegotides (RevDR-2). Acts as a potent competitive repressor of ROR alpha (RORA) function and also negatively regulates the expression of NR1D1. Regulates lipid and energy homeostasis in the skeletal muscle via repression of genes involved in lipid metabolism and myogenesis including: CD36, FABP3, FABP4, UCP3, SCD1 and MSTN. Regulates hepatic lipid metabolism via the repression of APOC3. Represses gene expression at a distance in macrophages by inhibiting the transcription of enhancer-derived RNAs (eRNAs). In addition to its activity as a repressor, can also act as a transcriptional activator. Acts as a transcriptional activator of the sterol regulatory element-binding protein 1 (SREBF1) and the inflammatory mediator interleukin-6 (IL6) in the skeletal muscle. Plays a role in the regulation of circadian sleep/wake cycle; essential for maintaining wakefulness during the dark phase or active period. Key regulator of skeletal muscle mitochondrial function; negatively regulates the skeletal muscle expression of core clock genes and genes involved in mitochondrial biogenesis, fatty acid beta-oxidation and lipid metabolism. May play a role in the circadian control of neutrophilic inflammation in the lung. The chain is Nuclear receptor subfamily 1 group D member 2 from Homo sapiens (Human).